Reading from the N-terminus, the 928-residue chain is Inner tegument protein (928 aa).

An interaction with large tegument protein region spans residues 482–928 (WGGAVPANLA…LAGLRKLFVE (447 aa)).

It belongs to the herpesviridae inner tegument protein family. In terms of assembly, interacts (via C-terminus) with the large tegument protein/LTP (via N-terminus).

The protein resides in the virion tegument. Its subcellular location is the host cytoplasm. It localises to the host nucleus. It is found in the host Golgi apparatus. The protein localises to the host trans-Golgi network. In terms of biological role, plays an essential role in cytoplasmic secondary envelopment during viral egress. Interacts with the capsid via the large tegument protein/LTP and participates in its transport to the host trans-Golgi network (TGN) where secondary envelopment occurs. Modulates tegumentation and capsid accumulation at the viral assembly complex. The protein is Inner tegument protein (ORF63) of Homo sapiens (Human).